Reading from the N-terminus, the 75-residue chain is Acyl carrier protein (75 aa).

Positions Met1–Glu75 constitute a Carrier domain. Ser35 is modified (O-(pantetheine 4'-phosphoryl)serine).

This sequence belongs to the acyl carrier protein (ACP) family. 4'-phosphopantetheine is transferred from CoA to a specific serine of apo-ACP by AcpS. This modification is essential for activity because fatty acids are bound in thioester linkage to the sulfhydryl of the prosthetic group.

It is found in the cytoplasm. It functions in the pathway lipid metabolism; fatty acid biosynthesis. Its function is as follows. Carrier of the growing fatty acid chain in fatty acid biosynthesis. This is Acyl carrier protein from Thermoanaerobacter pseudethanolicus (strain ATCC 33223 / 39E) (Clostridium thermohydrosulfuricum).